The primary structure comprises 125 residues: Large ribosomal subunit protein bL12 (125 aa).

It belongs to the bacterial ribosomal protein bL12 family. In terms of assembly, homodimer. Part of the ribosomal stalk of the 50S ribosomal subunit. Forms a multimeric L10(L12)X complex, where L10 forms an elongated spine to which 2 to 4 L12 dimers bind in a sequential fashion. Binds GTP-bound translation factors.

Functionally, forms part of the ribosomal stalk which helps the ribosome interact with GTP-bound translation factors. Is thus essential for accurate translation. This Anaeromyxobacter dehalogenans (strain 2CP-1 / ATCC BAA-258) protein is Large ribosomal subunit protein bL12.